The primary structure comprises 542 residues: MTRYIFVTGGVVSSLGKGIASASLAAILEARGLKVTILKLDPYINVDPGTMSPFQHGEVFVTEDGAETDLDLGHYERFIRTTMTKRNNFTTGRVYETVLRKERRGDYLGGTVQVIPHITDEIKRRIVEGAGDADVALVEIGGTVGDIESLPFLEATRQLKVEVGSRRALFMHLTLVPYIATAGEVKTKPTQHSVKEMRSIGLQPDILVCRSEHSIDQSSRRKIALFTNVEERAVIALEDAKSIYSIPMMLHAQGLDEIIVERFGLECGPADLSEWQSVVDNEANPEHEVTIAMVGKYMELLDAYKSLIEALKHAGIRNKTKVNIRYIDSEQVYQQGVDLLKGVDAILVPGGFGERGVEGKIQTVRYARENKIPYLGICLGLQVAVIEYARHVAGMEDAHSTEFNPKSAHPVVGLITEWQDASGKTEQRDEASDLGGTMRLGAQECKLVDGSTVRECYGKAIIEERHRHRYEVNGNLVPRLEEAGLQVAGWSQDGSLVEVVEVKDHPWFVACQFHPEFKSTPRDGHPLFEGFVRAALENAGGK.

The amidoligase domain stretch occupies residues 1–265 (MTRYIFVTGG…DEIIVERFGL (265 aa)). Residue S13 participates in CTP binding. S13 contributes to the UTP binding site. ATP is bound by residues 14 to 19 (SLGKGI) and D71. The Mg(2+) site is built by D71 and E139. Residues 146 to 148 (DIE), 186 to 191 (KTKPTQ), and K222 each bind CTP. UTP-binding positions include 186–191 (KTKPTQ) and K222. The Glutamine amidotransferase type-1 domain occupies 290 to 541 (TIAMVGKYME…VRAALENAGG (252 aa)). L-glutamine is bound at residue G351. The Nucleophile; for glutamine hydrolysis role is filled by C378. Residues 379-382 (LGLQ), E402, and R469 each bind L-glutamine. Catalysis depends on residues H514 and E516.

It belongs to the CTP synthase family. As to quaternary structure, homotetramer.

It catalyses the reaction UTP + L-glutamine + ATP + H2O = CTP + L-glutamate + ADP + phosphate + 2 H(+). The enzyme catalyses L-glutamine + H2O = L-glutamate + NH4(+). The catalysed reaction is UTP + NH4(+) + ATP = CTP + ADP + phosphate + 2 H(+). It functions in the pathway pyrimidine metabolism; CTP biosynthesis via de novo pathway; CTP from UDP: step 2/2. Allosterically activated by GTP, when glutamine is the substrate; GTP has no effect on the reaction when ammonia is the substrate. The allosteric effector GTP functions by stabilizing the protein conformation that binds the tetrahedral intermediate(s) formed during glutamine hydrolysis. Inhibited by the product CTP, via allosteric rather than competitive inhibition. Catalyzes the ATP-dependent amination of UTP to CTP with either L-glutamine or ammonia as the source of nitrogen. Regulates intracellular CTP levels through interactions with the four ribonucleotide triphosphates. This chain is CTP synthase, found in Hahella chejuensis (strain KCTC 2396).